Consider the following 298-residue polypeptide: Small ribosomal subunit protein uS2 (298 aa).

Residues 232-298 (ETFEGDDIPS…TAEAEEPAAE (67 aa)) form a disordered region. Acidic residues predominate over residues 234-250 (FEGDDIPSAIDFEDETP). Positions 251–276 (EPVAEVADAEVAAAEPVAEAAPTAEA) are enriched in low complexity.

Belongs to the universal ribosomal protein uS2 family.

This Acaryochloris marina (strain MBIC 11017) protein is Small ribosomal subunit protein uS2.